The chain runs to 417 residues: MKFWRKYTQQEMDEKITESLEKTLNYDNTKTIGIPGTKLDDTVFYDDHSFVKHSPYLRTFIQNPNHIGCHTYDKADILFGGTFDIERELIQLLAIDVLNGNDEEFDGYVTQGGTEANIQAMWVYRNYFKKERKAKHEEIAIITSADTHYSAYKGSDLLNIDIIKVPVDFYSRKIQENTLDSIVKEAKEIGKKYFIVISNMGTTMFGSVDDPDLYANIFDKYNLEYKIHVDGAFGGFIYPIDNKECKTDFSNKNVSSITLDGHKMLQAPYGTGIFVSRKNLIHNTLTKEATYIENLDVTLSGSRSGSNAVAIWMVLASYGPYGWMEKINKLRNRTKWLCKQLNDMRIKYYKEDSMNIVTIEEQYVNKEIAEKYFLVPEVHNPTNNWYKIVVMEHVELDILNSLVYDLRKFNKEHLKAM.

Residue Lys-263 is modified to N6-(pyridoxal phosphate)lysine.

This sequence belongs to the group II decarboxylase family. Pyridoxal 5'-phosphate serves as cofactor.

Its subcellular location is the cytoplasm. It catalyses the reaction L-tryptophan + H(+) = tryptamine + CO2. With respect to regulation, inhibited by (S)-alpha-fluoromethyltryptophan. Its function is as follows. Catalyzes the decarboxylation of tryptophan to tryptamine. Tryptamine is a neurotransmitter that induces the release of serotonin, which is suggested to modulate gastrointestinal motility. Therefore, the tryptophan decarboxylase from the gut bacteria Clostridium sporogenes (strain ATCC 15579) may influence host brain and behavior. Has weak activity with tyrosine. Activity against phenylalanine is undetectable. The polypeptide is Tryptophan decarboxylase (Clostridium sporogenes (strain ATCC 15579)).